A 180-amino-acid polypeptide reads, in one-letter code: ATP synthase subunit delta (180 aa).

It belongs to the ATPase delta chain family. In terms of assembly, F-type ATPases have 2 components, F(1) - the catalytic core - and F(0) - the membrane proton channel. F(1) has five subunits: alpha(3), beta(3), gamma(1), delta(1), epsilon(1). CF(0) has four main subunits: a(1), b(1), b'(1) and c(10-14). The alpha and beta chains form an alternating ring which encloses part of the gamma chain. F(1) is attached to F(0) by a central stalk formed by the gamma and epsilon chains, while a peripheral stalk is formed by the delta, b and b' chains.

The protein resides in the cellular thylakoid membrane. Its function is as follows. F(1)F(0) ATP synthase produces ATP from ADP in the presence of a proton or sodium gradient. F-type ATPases consist of two structural domains, F(1) containing the extramembraneous catalytic core and F(0) containing the membrane proton channel, linked together by a central stalk and a peripheral stalk. During catalysis, ATP synthesis in the catalytic domain of F(1) is coupled via a rotary mechanism of the central stalk subunits to proton translocation. Functionally, this protein is part of the stalk that links CF(0) to CF(1). It either transmits conformational changes from CF(0) to CF(1) or is implicated in proton conduction. The sequence is that of ATP synthase subunit delta from Prochlorococcus marinus (strain MIT 9215).